The chain runs to 365 residues: N-acetylgalactosamine-N,N'-diacetylbacillosaminyl-diphospho-undecaprenol 4-alpha-N-acetylgalactosaminyltransferase (365 aa).

The protein belongs to the glycosyltransferase group 1 family.

It localises to the cell inner membrane. It catalyses the reaction N-acetyl-alpha-D-galactosaminyl-(1-&gt;3)-N,N'-diacetyl-alpha-D-bacillosaminyl-tri-trans,hepta-cis-undecaprenyl diphosphate + UDP-N-acetyl-alpha-D-galactosamine = N-acetyl-alpha-D-galactosaminyl-(1-&gt;4)-N-acetyl-alpha-D-galactosaminyl-(1-&gt;3)-N,N'-diacetyl-alpha-D-bacillosaminyl-tri-trans,heptacis-undecaprenyl diphosphate + UDP + H(+). The protein operates within protein modification; protein glycosylation. Adds a GalNAc residue on to the Und-PP-Bac2,4diNAc-GalNAc disaccharide in the N-linked protein glycosylation pathway. Transfers the third sugar in the heptasaccharide biosynthesis. This Campylobacter jejuni subsp. jejuni serotype O:2 (strain ATCC 700819 / NCTC 11168) protein is N-acetylgalactosamine-N,N'-diacetylbacillosaminyl-diphospho-undecaprenol 4-alpha-N-acetylgalactosaminyltransferase (pglJ).